The chain runs to 517 residues: MKVTITSIDQVLPSVEITAPKSLALSHIDEWHSRGRSSLVWLYPKPKKPTQSLQLLDHLRSSLSQALNKFPQYAGKLSHSLQTGTSQKSKTRLCLTWGTGNDPGVHYITARASSPIDALLPPLGTSTGFTNGSGSYAWDRSGRSCIGLWPAVPLNKVYETCIQITTFECGGFSLSITMNHAVADATSVILFARHWSKTHELMVKVQTPSLSIAEPCFAPHLIDQYSTLELQDEGDNGKLLNKAHALPTLRNDLYESGARSLPDRLELSETYSVGDDIAVGDWERSGPMRSYMLHFSKEDINKIWESAKKEAGQDVSRQAAIVSYIWLAIIRAREWDKHGVCEPIKLFITFDVRRRLGLPDTLLGSPVLVTHVKFNGNDAISKSHGLLANRIWKTLSTYDVESVCAALYDITSSRPLISPAIWLGGRSTLFSSLCHADMYDVTFHETGPLLAAPAFAGMGGMIGLIKSKSAVPSRLPETYEDGIDMFFELDTESSIKLFSDPALSIFDGRALLQEFRQ.

Residue His-180 is the Proton acceptor of the active site.

The protein belongs to the plant acyltransferase family.

It participates in mycotoxin biosynthesis. Its function is as follows. Acyltransferase; part of the gene clusters that mediate the biosynthesis of the host-selective toxins (HSTs) AF-toxins responsible for Alternaria black spot of strawberry disease by the strawberry pathotype. AF-toxin I and III are valine derivatives of 2,3-dyhydroxy-isovaleric acid and 2-hydroxy-isovaleric acid respectively, while AF II is an isoleucine derivative of 2-hydroxy-valeric acid. These derivatives are bound to a 9,10-epoxy-8-hydroxy-9-methyl-decatrienoic acid (EDA) moiety. On cellular level, AF-toxins affect plasma membrane of susceptible cells and cause a sudden increase in loss of K(+) after a few minutes of toxin treatment. The aldo-keto reductase AFTS1 catalyzes the conversion of 2-keto-isovaleric acid (2-KIV) to 2-hydroxy-isovaleric acid (2-HIV) by reduction of its ketone to an alcohol. The acyl-CoA ligase AFT1, the hydrolase AFT2 and the enoyl-CoA hydratases AFT3 and AFT6, but also the polyketide synthase AFT9, the acyl-CoA dehydrogenase AFT10, the cytochrome P450 monooxygenase AFT11 and the oxidoreductase AFT12 are all involved in the biosynthesis of the AK-, AF- and ACT-toxin common EDA structural moiety. The exact function of each enzyme, and of additional enzymes identified within the AF-toxin clusters have still to be determined. The polypeptide is Acyltransferase AFT15-1 (AFT15-1) (Alternaria alternata (Alternaria rot fungus)).